Consider the following 219-residue polypeptide: Ribosome hibernation promotion factor (219 aa).

It belongs to the HPF/YfiA ribosome-associated protein family. Long HPF subfamily. In terms of assembly, interacts with 100S ribosomes.

Its subcellular location is the cytoplasm. In terms of biological role, required for dimerization of active 70S ribosomes into 100S ribosomes in stationary phase; 100S ribosomes are translationally inactive and sometimes present during exponential growth. The protein is Ribosome hibernation promotion factor of Mycobacterium tuberculosis (strain ATCC 25618 / H37Rv).